Here is a 184-residue protein sequence, read N- to C-terminus: ATP synthase subunit delta (184 aa).

Belongs to the ATPase delta chain family. F-type ATPases have 2 components, F(1) - the catalytic core - and F(0) - the membrane proton channel. F(1) has five subunits: alpha(3), beta(3), gamma(1), delta(1), epsilon(1). F(0) has three main subunits: a(1), b(2) and c(10-14). The alpha and beta chains form an alternating ring which encloses part of the gamma chain. F(1) is attached to F(0) by a central stalk formed by the gamma and epsilon chains, while a peripheral stalk is formed by the delta and b chains.

The protein localises to the cell membrane. F(1)F(0) ATP synthase produces ATP from ADP in the presence of a proton or sodium gradient. F-type ATPases consist of two structural domains, F(1) containing the extramembraneous catalytic core and F(0) containing the membrane proton channel, linked together by a central stalk and a peripheral stalk. During catalysis, ATP synthesis in the catalytic domain of F(1) is coupled via a rotary mechanism of the central stalk subunits to proton translocation. Its function is as follows. This protein is part of the stalk that links CF(0) to CF(1). It either transmits conformational changes from CF(0) to CF(1) or is implicated in proton conduction. The chain is ATP synthase subunit delta from Christiangramia forsetii (strain DSM 17595 / CGMCC 1.15422 / KT0803) (Gramella forsetii).